Reading from the N-terminus, the 545-residue chain is Phenylalanine--tRNA ligase beta subunit (545 aa).

The 77-residue stretch at 266-342 (LSPALRNINV…IGAGFGNLEA (77 aa)) folds into the B5 domain. The Mg(2+) site is built by D320, D326, E329, and D330.

It belongs to the phenylalanyl-tRNA synthetase beta subunit family. Type 2 subfamily. Tetramer of two alpha and two beta subunits. Mg(2+) serves as cofactor.

It is found in the cytoplasm. It carries out the reaction tRNA(Phe) + L-phenylalanine + ATP = L-phenylalanyl-tRNA(Phe) + AMP + diphosphate + H(+). This chain is Phenylalanine--tRNA ligase beta subunit, found in Methanospirillum hungatei JF-1 (strain ATCC 27890 / DSM 864 / NBRC 100397 / JF-1).